We begin with the raw amino-acid sequence, 98 residues long: Large ribosomal subunit protein uL23 (98 aa).

The protein belongs to the universal ribosomal protein uL23 family. Part of the 50S ribosomal subunit. Contacts protein L29, and trigger factor when it is bound to the ribosome.

Its function is as follows. One of the early assembly proteins it binds 23S rRNA. One of the proteins that surrounds the polypeptide exit tunnel on the outside of the ribosome. Forms the main docking site for trigger factor binding to the ribosome. The sequence is that of Large ribosomal subunit protein uL23 from Roseobacter denitrificans (strain ATCC 33942 / OCh 114) (Erythrobacter sp. (strain OCh 114)).